Reading from the N-terminus, the 644-residue chain is Biosynthetic arginine decarboxylase (644 aa).

Lys100 carries the N6-(pyridoxal phosphate)lysine modification. 282–292 is a binding site for substrate; it reads CDVGGGLAIDY.

The protein belongs to the Orn/Lys/Arg decarboxylase class-II family. SpeA subfamily. The cofactor is Mg(2+). Pyridoxal 5'-phosphate serves as cofactor.

It carries out the reaction L-arginine + H(+) = agmatine + CO2. Its function is as follows. Catalyzes the biosynthesis of agmatine from arginine. The polypeptide is Biosynthetic arginine decarboxylase (Gloeobacter violaceus (strain ATCC 29082 / PCC 7421)).